The sequence spans 231 residues: TATA-box-binding protein (231 aa).

2 consecutive repeat copies span residues 58–134 (LQNI…ARII) and 148–225 (IQNI…YPVL).

The protein belongs to the TBP family. In terms of assembly, belongs to the TFIID complex together with the TBP-associated factors (TAFs). Binds DNA as monomer.

Its subcellular location is the nucleus. Functionally, general transcription factor that functions at the core of the DNA-binding multiprotein factor TFIID. Binding of TFIID to the TATA box is the initial transcriptional step of the pre-initiation complex (PIC), playing a role in the activation of eukaryotic genes transcribed by RNA polymerase II. This is TATA-box-binding protein (tbp1) from Schizosaccharomyces pombe (strain 972 / ATCC 24843) (Fission yeast).